A 440-amino-acid polypeptide reads, in one-letter code: Ribosomal protein uS12 methylthiotransferase RimO (440 aa).

In terms of domain architecture, MTTase N-terminal spans 8 to 125 (LRCHAISLGC…WNEQILLALN (118 aa)). 6 residues coordinate [4Fe-4S] cluster: Cys17, Cys52, Cys87, Cys152, Cys156, and Cys159. One can recognise a Radical SAM core domain in the interval 138–368 (TTGKSYAWLK…MEIQLKISEK (231 aa)). Positions 371–439 (KNFVGKRLSL…SYDLVALADS (69 aa)) constitute a TRAM domain.

The protein belongs to the methylthiotransferase family. RimO subfamily. It depends on [4Fe-4S] cluster as a cofactor.

The protein resides in the cytoplasm. The enzyme catalyses L-aspartate(89)-[ribosomal protein uS12]-hydrogen + (sulfur carrier)-SH + AH2 + 2 S-adenosyl-L-methionine = 3-methylsulfanyl-L-aspartate(89)-[ribosomal protein uS12]-hydrogen + (sulfur carrier)-H + 5'-deoxyadenosine + L-methionine + A + S-adenosyl-L-homocysteine + 2 H(+). Functionally, catalyzes the methylthiolation of an aspartic acid residue of ribosomal protein uS12. The polypeptide is Ribosomal protein uS12 methylthiotransferase RimO (Lawsonia intracellularis (strain PHE/MN1-00)).